We begin with the raw amino-acid sequence, 278 residues long: Octanoyltransferase LipM (278 aa).

One can recognise a BPL/LPL catalytic domain in the interval 33-248 (KKMPPTIRFY…GFEKGLDVEL (216 aa)). Catalysis depends on C150, which acts as the Acyl-thioester intermediate.

This sequence belongs to the octanoyltransferase LipM family. As to quaternary structure, monomer.

It catalyses the reaction octanoyl-[ACP] + L-lysyl-[protein] = N(6)-octanoyl-L-lysyl-[protein] + holo-[ACP] + H(+). It participates in protein modification; protein lipoylation via endogenous pathway; protein N(6)-(lipoyl)lysine from octanoyl-[acyl-carrier-protein]. Catalyzes the transfer of endogenously produced octanoic acid from octanoyl-acyl-carrier-protein onto the lipoyl domain of GcvH, an intermediate carrier during protein lipoylation. In Bacillus anthracis, this protein is Octanoyltransferase LipM.